Consider the following 320-residue polypeptide: MEIQFLGTGAGSPSKSRNVSSLALKLLDERNEVWLFDAGEGTQHQILQTAIRPRKIAKVFITHLHGDHIFGLPGFLASRSNQGGTDPLTIYGPSGIEDFVKTSLKVSQSHLSYPLKFVLLQHPGVAFEDQTFKVTFDRLDHRITSFGFRIEEKPHPGELLIDKVRAAKIPSGPVYAALKAGETVTLPDGRIFDGHDFIGPAQPGRTVAIFGDTRMCNRALPLAAGADVLVHESTFGPDESQLAKQYYHATNVQAAALAKRAGVGRLLLNHISARYLSPGVAMLEKTARQIFPNTHVVKDFEEINIPFRSEQSEPAVTVKS.

His-63, His-65, Asp-67, His-68, His-141, Asp-212, and His-270 together coordinate Zn(2+). The active-site Proton acceptor is the Asp-67.

It belongs to the RNase Z family. As to quaternary structure, homodimer. The cofactor is Zn(2+).

It carries out the reaction Endonucleolytic cleavage of RNA, removing extra 3' nucleotides from tRNA precursor, generating 3' termini of tRNAs. A 3'-hydroxy group is left at the tRNA terminus and a 5'-phosphoryl group is left at the trailer molecule.. In terms of biological role, zinc phosphodiesterase, which displays some tRNA 3'-processing endonuclease activity. Probably involved in tRNA maturation, by removing a 3'-trailer from precursor tRNA. This Lacticaseibacillus casei (strain BL23) (Lactobacillus casei) protein is Ribonuclease Z.